The chain runs to 328 residues: WUSCHEL-related homeobox 6 (328 aa).

Residues 1 to 11 (MEGSSNSPDRQ) are compositionally biased toward polar residues. A disordered region spans residues 1 to 45 (MEGSSNSPDRQSSGGSPPEERGGGGSGGGGGRSAAGEPVRSRWTP). Over residues 23–33 (GGGSGGGGGRS) the composition is skewed to gly residues. Residues 38 to 102 (PVRSRWTPKP…NRRSRSRRRQ (65 aa)) constitute a DNA-binding region (homeobox; WUS-type).

The protein belongs to the WUS homeobox family.

It localises to the nucleus. Functionally, transcription factor which may be involved in developmental processes. This is WUSCHEL-related homeobox 6 (WOX6) from Oryza sativa subsp. japonica (Rice).